A 691-amino-acid chain; its full sequence is DNA ligase (691 aa).

Residues 41–45 (DAEYD), 90–91 (SL), and glutamate 130 contribute to the NAD(+) site. The N6-AMP-lysine intermediate role is filled by lysine 132. Residues arginine 153, glutamate 190, lysine 307, and lysine 331 each contribute to the NAD(+) site. Residues cysteine 425, cysteine 428, cysteine 443, and cysteine 449 each coordinate Zn(2+). In terms of domain architecture, BRCT spans 610 to 691 (APQGVLAGKT…LHQLLEGNTP (82 aa)).

Belongs to the NAD-dependent DNA ligase family. LigA subfamily. Requires Mg(2+) as cofactor. Mn(2+) serves as cofactor.

It catalyses the reaction NAD(+) + (deoxyribonucleotide)n-3'-hydroxyl + 5'-phospho-(deoxyribonucleotide)m = (deoxyribonucleotide)n+m + AMP + beta-nicotinamide D-nucleotide.. In terms of biological role, DNA ligase that catalyzes the formation of phosphodiester linkages between 5'-phosphoryl and 3'-hydroxyl groups in double-stranded DNA using NAD as a coenzyme and as the energy source for the reaction. It is essential for DNA replication and repair of damaged DNA. In Burkholderia cenocepacia (strain HI2424), this protein is DNA ligase.